A 68-amino-acid chain; its full sequence is Large ribosomal subunit protein bL28 (68 aa).

The tract at residues M1 to E30 is disordered. Residues Q13–N22 are compositionally biased toward polar residues.

The protein belongs to the bacterial ribosomal protein bL28 family.

The chain is Large ribosomal subunit protein bL28 from Solidesulfovibrio magneticus (strain ATCC 700980 / DSM 13731 / RS-1) (Desulfovibrio magneticus).